The sequence spans 176 residues: uncharacterized protein (176 aa).

The interval Arg71–Tyr176 is disordered. 2 stretches are compositionally biased toward low complexity: residues Asp77 to Gly87 and Ser100 to Arg109. Over residues Lys140–Gly152 the composition is skewed to basic residues.

This is an uncharacterized protein from Orgyia pseudotsugata multicapsid polyhedrosis virus (OpMNPV).